A 109-amino-acid polypeptide reads, in one-letter code: Small ribosomal subunit protein uS17 (109 aa).

Belongs to the universal ribosomal protein uS17 family. Part of the 30S ribosomal subunit.

In terms of biological role, one of the primary rRNA binding proteins, it binds specifically to the 5'-end of 16S ribosomal RNA. The polypeptide is Small ribosomal subunit protein uS17 (Methanococcoides burtonii (strain DSM 6242 / NBRC 107633 / OCM 468 / ACE-M)).